The following is an 81-amino-acid chain: Sulfur carrier protein TusA (81 aa).

Cys-19 serves as the catalytic Cysteine persulfide intermediate.

It belongs to the sulfur carrier protein TusA family. In terms of assembly, interacts with IscS.

It is found in the cytoplasm. It participates in tRNA modification. In terms of biological role, sulfur carrier protein involved in sulfur trafficking in the cell. Part of a sulfur-relay system required for 2-thiolation during synthesis of 2-thiouridine of the modified wobble base 5-methylaminomethyl-2-thiouridine (mnm(5)s(2)U) in tRNA. Interacts with IscS and stimulates its cysteine desulfurase activity. Accepts an activated sulfur from IscS, which is then transferred to TusD, and thus determines the direction of sulfur flow from IscS to 2-thiouridine formation. Also appears to be involved in sulfur transfer for the biosynthesis of molybdopterin. The sequence is that of Sulfur carrier protein TusA from Cronobacter sakazakii (strain ATCC BAA-894) (Enterobacter sakazakii).